The primary structure comprises 254 residues: Pyruvate dehydrogenase complex repressor (254 aa).

The region spanning 9 to 77 is the HTH gntR-type domain; it reads PKLSDVIEQQ…QGGGTFVQSS (69 aa). A DNA-binding region (H-T-H motif) is located at residues 37-56; that stretch reads ERELAKQFDVSRPSLREAIQ.

Its function is as follows. Transcriptional repressor for the pyruvate dehydrogenase complex genes aceEF and lpd. The chain is Pyruvate dehydrogenase complex repressor (pdhR) from Salmonella typhi.